We begin with the raw amino-acid sequence, 432 residues long: Glutamate-1-semialdehyde 2,1-aminomutase 1 (432 aa).

K268 is subject to N6-(pyridoxal phosphate)lysine.

The protein belongs to the class-III pyridoxal-phosphate-dependent aminotransferase family. HemL subfamily. As to quaternary structure, homodimer. It depends on pyridoxal 5'-phosphate as a cofactor.

It localises to the cytoplasm. It carries out the reaction (S)-4-amino-5-oxopentanoate = 5-aminolevulinate. It participates in porphyrin-containing compound metabolism; protoporphyrin-IX biosynthesis; 5-aminolevulinate from L-glutamyl-tRNA(Glu): step 2/2. This Bacillus cereus (strain B4264) protein is Glutamate-1-semialdehyde 2,1-aminomutase 1.